A 280-amino-acid chain; its full sequence is Formyltetrahydrofolate deformylase (280 aa).

In terms of domain architecture, ACT spans 8 to 86 (VLRTICPDQK…RELNPAGRRR (79 aa)). Residue Asp-225 is part of the active site.

It belongs to the PurU family.

It catalyses the reaction (6R)-10-formyltetrahydrofolate + H2O = (6S)-5,6,7,8-tetrahydrofolate + formate + H(+). It participates in purine metabolism; IMP biosynthesis via de novo pathway; formate from 10-formyl-5,6,7,8-tetrahydrofolate: step 1/1. Catalyzes the hydrolysis of 10-formyltetrahydrofolate (formyl-FH4) to formate and tetrahydrofolate (FH4). This Escherichia coli O6:H1 (strain CFT073 / ATCC 700928 / UPEC) protein is Formyltetrahydrofolate deformylase.